The sequence spans 261 residues: Small ribosomal subunit protein uS2 (261 aa).

An N-acetylserine modification is found at Ser-2. A disordered region spans residues 214–261 (ATEDIKTDDVEEAPAADAETEWTGETEEVDWAESGATPAAEEAAASNW). The span at 222–244 (DVEEAPAADAETEWTGETEEVDW) shows a compositional bias: acidic residues. Residues 245–261 (AESGATPAAEEAAASNW) show a composition bias toward low complexity.

This sequence belongs to the universal ribosomal protein uS2 family. Component of the small ribosomal subunit. Mature ribosomes consist of a small (40S) and a large (60S) subunit. The 40S subunit contains about 33 different proteins and 1 molecule of RNA (18S). The 60S subunit contains about 49 different proteins and 3 molecules of RNA (25S, 5.8S and 5S). Interacts with RPS21.

The protein resides in the cytoplasm. Required for the assembly and/or stability of the 40S ribosomal subunit. Required for the processing of the 20S rRNA-precursor to mature 18S rRNA in a late step of the maturation of 40S ribosomal subunits. The sequence is that of Small ribosomal subunit protein uS2 from Debaryomyces hansenii (strain ATCC 36239 / CBS 767 / BCRC 21394 / JCM 1990 / NBRC 0083 / IGC 2968) (Yeast).